Consider the following 169-residue polypeptide: Biogenesis of lysosome-related organelles complex 1 subunit 4 (169 aa).

It belongs to the BLOC1S4 family. Component of the biogenesis of lysosome-related organelles complex-1 (BLOC-1) composed of Blos1, Blos2, Blos3, Blos4, Dysb, Muted, Pldn and Snapin. Interacts with Pldn.

In terms of biological role, component of the biogenesis of lysosome-related organelles complex-1 (BLOC-1) involved in pigment granule biogenesis. In Drosophila melanogaster (Fruit fly), this protein is Biogenesis of lysosome-related organelles complex 1 subunit 4.